A 186-amino-acid chain; its full sequence is Peptidyl-tRNA hydrolase (186 aa).

Position 14 (Tyr14) interacts with tRNA. His19 (proton acceptor) is an active-site residue. Residues Phe64, Asn66, and Asn112 each coordinate tRNA.

The protein belongs to the PTH family. In terms of assembly, monomer.

It is found in the cytoplasm. The enzyme catalyses an N-acyl-L-alpha-aminoacyl-tRNA + H2O = an N-acyl-L-amino acid + a tRNA + H(+). Functionally, hydrolyzes ribosome-free peptidyl-tRNAs (with 1 or more amino acids incorporated), which drop off the ribosome during protein synthesis, or as a result of ribosome stalling. Catalyzes the release of premature peptidyl moieties from peptidyl-tRNA molecules trapped in stalled 50S ribosomal subunits, and thus maintains levels of free tRNAs and 50S ribosomes. The sequence is that of Peptidyl-tRNA hydrolase from Mycoplasma mycoides subsp. mycoides SC (strain CCUG 32753 / NCTC 10114 / PG1).